Consider the following 261-residue polypeptide: Small ribosomal subunit protein eS1A (261 aa).

Positions 1-18 (MTLGKNKRISKGGKRGKK) are enriched in basic residues. The tract at residues 1–23 (MTLGKNKRISKGGKRGKKKTQET) is disordered.

This sequence belongs to the eukaryotic ribosomal protein eS1 family. Component of the small ribosomal subunit. Mature ribosomes consist of a small (40S) and a large (60S) subunit. The 40S subunit contains about 33 different proteins and 1 molecule of RNA (18S). The 60S subunit contains about 49 different proteins and 3 molecules of RNA (25S, 5.8S and 5S).

The protein localises to the cytoplasm. This is Small ribosomal subunit protein eS1A from Trypanosoma cruzi (strain CL Brener).